We begin with the raw amino-acid sequence, 283 residues long: Cilia- and flagella-associated protein 77 (283 aa).

The tract at residues 151-170 (DQEDRRQKEPPPIPPNMTFG) is disordered.

Belongs to the CFAP77 family. Microtubule inner protein component of sperm flagellar doublet microtubules.

It is found in the cytoplasm. The protein localises to the cytoskeleton. It localises to the cilium axoneme. Its subcellular location is the flagellum axoneme. Microtubule inner protein (MIP) part of the dynein-decorated doublet microtubules (DMTs) in cilia axoneme, which is required for motile cilia beating. In Mus musculus (Mouse), this protein is Cilia- and flagella-associated protein 77.